Consider the following 785-residue polypeptide: Semaphorin-3F (785 aa).

The first 18 residues, 1–18 (MLVTAFILWASLLTGAWP), serve as a signal peptide directing secretion. A Sema domain is found at 31–545 (RVRLSFKELK…SAVGVTHLSL (515 aa)). A glycan (N-linked (GlcNAc...) asparagine) is linked at Asn53. Cys104 and Cys115 form a disulfide bridge. N-linked (GlcNAc...) asparagine glycosylation occurs at Asn126. 4 disulfides stabilise this stretch: Cys133–Cys142, Cys300–Cys412, Cys324–Cys372, and Cys548–Cys566. A disordered region spans residues 583–602 (RSRRQDVRHGNPIRQCRGFN). One can recognise an Ig-like C2-type domain in the interval 605 to 695 (ANKNAVESVQ…KHIVTRVQLH (91 aa)). A disulfide bridge connects residues Cys678 and Cys746. Residues 753-785 (VPPRPREAPGALRPPELQDQKKPRNRRHHPPDT) are disordered. Positions 775 to 785 (PRNRRHHPPDT) are enriched in basic residues.

The protein belongs to the semaphorin family. In terms of tissue distribution, expressed ubiquitously in adulthood. During embryogenesis, expressed in subregions of the central nervous system and various other tissues like skin, kidney, lung and intestine.

The protein localises to the secreted. This Mus musculus (Mouse) protein is Semaphorin-3F (Sema3f).